Reading from the N-terminus, the 473-residue chain is ATP synthase subunit beta (473 aa).

158–165 contributes to the ATP binding site; that stretch reads GGAGVGKT.

It belongs to the ATPase alpha/beta chains family. In terms of assembly, F-type ATPases have 2 components, CF(1) - the catalytic core - and CF(0) - the membrane proton channel. CF(1) has five subunits: alpha(3), beta(3), gamma(1), delta(1), epsilon(1). CF(0) has three main subunits: a(1), b(2) and c(9-12). The alpha and beta chains form an alternating ring which encloses part of the gamma chain. CF(1) is attached to CF(0) by a central stalk formed by the gamma and epsilon chains, while a peripheral stalk is formed by the delta and b chains.

The protein resides in the cell membrane. It catalyses the reaction ATP + H2O + 4 H(+)(in) = ADP + phosphate + 5 H(+)(out). Produces ATP from ADP in the presence of a proton gradient across the membrane. The catalytic sites are hosted primarily by the beta subunits. In Carboxydothermus hydrogenoformans (strain ATCC BAA-161 / DSM 6008 / Z-2901), this protein is ATP synthase subunit beta.